The primary structure comprises 537 residues: uncharacterized protein (537 aa).

An N-terminal signal peptide occupies residues 1-15 (MALFQLFSFLNVTLG). 2 consecutive transmembrane segments (helical) span residues 459 to 479 (VLFS…GCCF) and 490 to 510 (VILL…LGFT).

The protein resides in the host membrane. This is an uncharacterized protein from Citrus sinensis (Sweet orange).